A 101-amino-acid polypeptide reads, in one-letter code: Urease subunit beta (101 aa).

It belongs to the urease beta subunit family. In terms of assembly, heterotrimer of UreA (gamma), UreB (beta) and UreC (alpha) subunits. Three heterotrimers associate to form the active enzyme.

It localises to the cytoplasm. The enzyme catalyses urea + 2 H2O + H(+) = hydrogencarbonate + 2 NH4(+). It functions in the pathway nitrogen metabolism; urea degradation; CO(2) and NH(3) from urea (urease route): step 1/1. The protein is Urease subunit beta of Bradyrhizobium sp. (strain BTAi1 / ATCC BAA-1182).